Consider the following 393-residue polypeptide: Mitogen-activated protein kinase homolog NTF4 (393 aa).

Positions 1–32 (MDGPAHQTDTVMSDAAGQQPAPPSQPVAGIDN) are disordered. In terms of domain architecture, Protein kinase spans 60 to 345 (KPPIMPIGKG…VEDALAHPYL (286 aa)). Residues 66-74 (IGKGAYGIV) and lysine 89 contribute to the ATP site. Aspartate 186 acts as the Proton acceptor in catalysis. Phosphothreonine is present on threonine 218. The TXY motif lies at 218–220 (TEY). Tyrosine 220 carries the phosphotyrosine modification.

The protein belongs to the protein kinase superfamily. CMGC Ser/Thr protein kinase family. MAP kinase subfamily. The cofactor is Mg(2+). Dually phosphorylated on Thr-218 and Tyr-220, which activates the enzyme. Very low autophosphorylation, although dramatically increased when Mn(2+) is added to the reaction instead of Mg(2+).

The enzyme catalyses L-seryl-[protein] + ATP = O-phospho-L-seryl-[protein] + ADP + H(+). It catalyses the reaction L-threonyl-[protein] + ATP = O-phospho-L-threonyl-[protein] + ADP + H(+). Activated by tyrosine and threonine phosphorylation. This chain is Mitogen-activated protein kinase homolog NTF4 (NTF4), found in Nicotiana tabacum (Common tobacco).